A 201-amino-acid polypeptide reads, in one-letter code: Natural cytotoxicity triggering receptor 3 (201 aa).

An N-terminal signal peptide occupies residues 1-18 (MAWMLLLILIMVYPGSCA). In terms of domain architecture, Ig-like spans 19 to 126 (LWVSQPPEIR…VGTGNGTRLV (108 aa)). Topologically, residues 19–133 (LWVSQPPEIR…RLVVEKEYPQ (115 aa)) are extracellular. A disulfide bridge links Cys-39 with Cys-108. Residues Asn-42 and Asn-121 are each glycosylated (N-linked (GlcNAc...) asparagine). A helical transmembrane segment spans residues 134 to 154 (LGAGTVLLLRAGFYAVSFLSV). The Cytoplasmic portion of the chain corresponds to 155 to 201 (AMGSTLYYQGKCLTWKGPRRQLPAVVPGPLPPPCGSSAHLLPPVPGG).

The protein belongs to the natural cytotoxicity receptor (NCR) family. In terms of assembly, homodimer in the unliganted form. Interacts with CD3Z. Interacts with and is activated by binding to NCR3LG1. Interacts with and is activated by binding to BAG6. Interacts with and is inhibited by binding to LGALS3.

It is found in the cell membrane. Cell membrane receptor of natural killer/NK cells that is activated by binding of extracellular ligands including BAG6 and NCR3LG1. Stimulates NK cells cytotoxicity toward neighboring cells producing these ligands. It controls, for instance, NK cells cytotoxicity against tumor cells. Engagement of NCR3 by BAG6 also promotes myeloid dendritic cells (DC) maturation, both through killing DCs that did not acquire a mature phenotype, and inducing the release by NK cells of TNFA and IFNG that promote DC maturation. The sequence is that of Natural cytotoxicity triggering receptor 3 (NCR3) from Macaca mulatta (Rhesus macaque).